The following is a 275-amino-acid chain: Type III pantothenate kinase (275 aa).

9-16 (DIGNTRLK) lines the ATP pocket. Substrate-binding positions include tyrosine 114 and 121–124 (GVDR). Catalysis depends on aspartate 123, which acts as the Proton acceptor. Threonine 147 is an ATP binding site. Threonine 209 contributes to the substrate binding site.

This sequence belongs to the type III pantothenate kinase family. Homodimer. The cofactor is NH4(+). K(+) is required as a cofactor.

It is found in the cytoplasm. The enzyme catalyses (R)-pantothenate + ATP = (R)-4'-phosphopantothenate + ADP + H(+). It functions in the pathway cofactor biosynthesis; coenzyme A biosynthesis; CoA from (R)-pantothenate: step 1/5. Its function is as follows. Catalyzes the phosphorylation of pantothenate (Pan), the first step in CoA biosynthesis. This chain is Type III pantothenate kinase, found in Cupriavidus pinatubonensis (strain JMP 134 / LMG 1197) (Cupriavidus necator (strain JMP 134)).